Consider the following 248-residue polypeptide: Mannose-binding protein C (248 aa).

Positions 1–20 (MSLFPSLTLLLLSVVATSYS) are cleaved as a signal peptide. The Collagen-like domain occupies 42–99 (GINGFPGKDGRDGTKGEKGEPGQGLRGLQGPPGKLGPPGNPGSSGSPGPKGQKGDPGE). The tract at residues 43–113 (INGFPGKDGR…DSSLAASERK (71 aa)) is disordered. At Pro-47 the chain carries 4-hydroxyproline. Positions 49–61 (KDGRDGTKGEKGE) are enriched in basic and acidic residues. Residues Pro-73, Pro-79, Pro-82, and Pro-88 each carry the 4-hydroxyproline modification. The segment covering 82–91 (PGSSGSPGPK) has biased composition (low complexity). Residues 112-130 (RKALQTEMARIKKWLTFSL) adopt a coiled-coil conformation. Positions 134–245 (VGNKFFLTNG…CSSSHLALCE (112 aa)) constitute a C-type lectin domain. Intrachain disulfides connect Cys-155/Cys-244 and Cys-222/Cys-236.

Oligomeric complex of 3 or more homotrimers. Interacts with MASP1 and MASP2. Interacts with MEP1A and MEP1B and may inhibit their catalytic activity. In terms of processing, hydroxylation on proline residues within the sequence motif, GXPG, is most likely to be 4-hydroxy as this fits the requirement for 4-hydroxylation in vertebrates.

It is found in the secreted. Functionally, calcium-dependent lectin involved in innate immune defense. Binds mannose, fucose and N-acetylglucosamine on different microorganisms and activates the lectin complement pathway. Binds to late apoptotic cells, as well as to apoptotic blebs and to necrotic cells, but not to early apoptotic cells, facilitating their uptake by macrophages. In Chlorocebus aethiops (Green monkey), this protein is Mannose-binding protein C (MBL2).